The sequence spans 509 residues: 2,3-bisphosphoglycerate-independent phosphoglycerate mutase (509 aa).

Aspartate 11 provides a ligand contact to Mn(2+). Tyrosine 35 carries the post-translational modification Phosphotyrosine. Serine 61 lines the Mn(2+) pocket. Catalysis depends on serine 61, which acts as the Phosphoserine intermediate. Substrate-binding positions include histidine 122, 152–153 (RD), arginine 184, arginine 190, 260–263 (RPDR), and lysine 335. 5 residues coordinate Mn(2+): aspartate 402, histidine 406, aspartate 443, histidine 444, and histidine 461.

It belongs to the BPG-independent phosphoglycerate mutase family. As to quaternary structure, monomer. It depends on Mn(2+) as a cofactor.

It carries out the reaction (2R)-2-phosphoglycerate = (2R)-3-phosphoglycerate. The protein operates within carbohydrate degradation; glycolysis; pyruvate from D-glyceraldehyde 3-phosphate: step 3/5. Functionally, essential for rapid growth and for sporulation. Catalyzes the interconversion of 2-phosphoglycerate and 3-phosphoglycerate. The polypeptide is 2,3-bisphosphoglycerate-independent phosphoglycerate mutase (Bacillus cereus (strain ATCC 10987 / NRS 248)).